A 157-amino-acid chain; its full sequence is Protein Smg homolog (157 aa).

The protein belongs to the Smg family.

This chain is Protein Smg homolog, found in Xanthomonas campestris pv. campestris (strain 8004).